We begin with the raw amino-acid sequence, 426 residues long: Histidine--tRNA ligase (426 aa).

The protein belongs to the class-II aminoacyl-tRNA synthetase family. In terms of assembly, homodimer.

It localises to the cytoplasm. It catalyses the reaction tRNA(His) + L-histidine + ATP = L-histidyl-tRNA(His) + AMP + diphosphate + H(+). In Geobacillus kaustophilus (strain HTA426), this protein is Histidine--tRNA ligase.